Here is a 578-residue protein sequence, read N- to C-terminus: Probable methylcrotonoyl-CoA carboxylase beta chain, mitochondrial (578 aa).

A mitochondrion-targeting transit peptide spans 1–29 (MIRLNWLFRSSSVLLRSQVRLLHVGDANV). Residues 48 to 305 (MASLVGDLRN…SATNSYNDQL (258 aa)) enclose the CoA carboxyltransferase N-terminal domain. A carboxyltransferase region spans residues 48 to 570 (MASLVGDLRN…KAALNNAGQE (523 aa)). Positions 321–570 (AVEEPRYDAE…KAALNNAGQE (250 aa)) constitute a CoA carboxyltransferase C-terminal domain. Positions 355-388 (DGSRFTEFKKLYGETLVCGFAKLYGHTVGIVGNN) are acyl-CoA binding.

The protein belongs to the AccD/PCCB family. Expressed in third instar larval ring gland (lateral and medial secretory cells and corpus cardiacum cells) and CNS.

The protein localises to the mitochondrion matrix. It carries out the reaction 3-methylbut-2-enoyl-CoA + hydrogencarbonate + ATP = 3-methyl-(2E)-glutaconyl-CoA + ADP + phosphate + H(+). Its pathway is amino-acid degradation; L-leucine degradation; (S)-3-hydroxy-3-methylglutaryl-CoA from 3-isovaleryl-CoA: step 2/3. Functionally, carboxyltransferase subunit of the 3-methylcrotonyl-CoA carboxylase, an enzyme that catalyzes the conversion of 3-methylcrotonyl-CoA to 3-methylglutaconyl-CoA, a critical step for leucine and isovaleric acid catabolism. Vital for adult survival. In Drosophila melanogaster (Fruit fly), this protein is Probable methylcrotonoyl-CoA carboxylase beta chain, mitochondrial.